Reading from the N-terminus, the 144-residue chain is 3-hydroxyacyl-[acyl-carrier-protein] dehydratase FabZ (144 aa).

Residue H51 is part of the active site.

Belongs to the thioester dehydratase family. FabZ subfamily.

The protein localises to the cytoplasm. It catalyses the reaction a (3R)-hydroxyacyl-[ACP] = a (2E)-enoyl-[ACP] + H2O. Functionally, involved in unsaturated fatty acids biosynthesis. Catalyzes the dehydration of short chain beta-hydroxyacyl-ACPs and long chain saturated and unsaturated beta-hydroxyacyl-ACPs. The sequence is that of 3-hydroxyacyl-[acyl-carrier-protein] dehydratase FabZ from Clostridium botulinum (strain ATCC 19397 / Type A).